The following is a 109-amino-acid chain: Large ribosomal subunit protein eL42 (109 aa).

The disordered stretch occupies residues 23–53 (VSQYKKSKESTHAQGRRRYDMKQSGFGGQTK). Residues 28-43 (KSKESTHAQGRRRYDM) are compositionally biased toward basic and acidic residues.

The protein belongs to the eukaryotic ribosomal protein eL42 family.

Its subcellular location is the cytoplasm. The sequence is that of Large ribosomal subunit protein eL42 (RPL36A) from Tetrahymena thermophila (strain SB210).